A 350-amino-acid chain; its full sequence is Biotin synthase (350 aa).

Residues 1 to 13 (MVTQAATRPSNDA) show a composition bias toward polar residues. The interval 1-20 (MVTQAATRPSNDAGQDGVTE) is disordered. A Radical SAM core domain is found at 71–296 (PEVEVEGIIS…RTMLRFAGGR (226 aa)). Positions 86, 90, and 93 each coordinate [4Fe-4S] cluster. [2Fe-2S] cluster is bound by residues Cys129, Cys162, Cys221, and Arg291.

Belongs to the radical SAM superfamily. Biotin synthase family. Homodimer. [4Fe-4S] cluster serves as cofactor. The cofactor is [2Fe-2S] cluster.

It catalyses the reaction (4R,5S)-dethiobiotin + (sulfur carrier)-SH + 2 reduced [2Fe-2S]-[ferredoxin] + 2 S-adenosyl-L-methionine = (sulfur carrier)-H + biotin + 2 5'-deoxyadenosine + 2 L-methionine + 2 oxidized [2Fe-2S]-[ferredoxin]. Its pathway is cofactor biosynthesis; biotin biosynthesis; biotin from 7,8-diaminononanoate: step 2/2. Catalyzes the conversion of dethiobiotin (DTB) to biotin by the insertion of a sulfur atom into dethiobiotin via a radical-based mechanism. The sequence is that of Biotin synthase from Mycobacterium ulcerans (strain Agy99).